We begin with the raw amino-acid sequence, 656 residues long: Histidine decarboxylase (656 aa).

Positions 84 and 197 each coordinate substrate. An N6-(pyridoxal phosphate)lysine modification is found at K308. S343 and S362 each carry phosphoserine; by PKA. The tract at residues 481-502 is disordered; sequence HCTSQPSPRAKNLIPPPVTRDS.

Belongs to the group II decarboxylase family. In terms of assembly, homodimer. Requires pyridoxal 5'-phosphate as cofactor. In terms of processing, may be post-translationally processed. As to expression, brain, glandular regions of the stomach, mast cells and fetal liver.

It carries out the reaction L-histidine + H(+) = histamine + CO2. Its pathway is amine and polyamine biosynthesis; histamine biosynthesis; histamine from L-histidine: step 1/1. With respect to regulation, phosphorylation of brain HDC by cAMP-dependent protein kinase leads to enzyme inactivation. Its function is as follows. Catalyzes the biosynthesis of histamine from histidine. In Rattus norvegicus (Rat), this protein is Histidine decarboxylase (Hdc).